We begin with the raw amino-acid sequence, 156 residues long: Tripartite terminase subunit 2 (156 aa).

A disordered region spans residues 1 to 37 (MYESENASEHHPELEDVFSENTGDSNPSMGSSDSTRS). The span at 19-37 (SENTGDSNPSMGSSDSTRS) shows a compositional bias: polar residues.

Belongs to the herpesviridae TRM2 protein family. Associates with TRM1 and TRM3 to form the tripartite terminase complex.

The protein resides in the host nucleus. Component of the molecular motor that translocates viral genomic DNA in empty capsid during DNA packaging. Forms a tripartite terminase complex together with TRM1 and TRM3 in the host cytoplasm. Once the complex reaches the host nucleus, it interacts with the capsid portal vertex. This portal forms a ring in which genomic DNA is translocated into the capsid. The polypeptide is Tripartite terminase subunit 2 (Varicella-zoster virus (strain Dumas) (HHV-3)).